Here is a 201-residue protein sequence, read N- to C-terminus: Probable phosphopantothenoylcysteine decarboxylase (201 aa).

FMN is bound by residues 20–22, 45–47, 98–101, and alanine 132; these read GSV, SKS, and SANT. Substrate-binding positions include asparagine 134 and 164–166; that span reads KLA. Cysteine 167 (proton donor) is an active-site residue. Methionine 175 serves as a coordination point for substrate.

This sequence belongs to the HFCD (homooligomeric flavin containing Cys decarboxylase) superfamily. As to quaternary structure, homotrimer. It depends on FMN as a cofactor. Expressed in roots, shoots, leaves, flowers, developing siliques and seeds.

The enzyme catalyses N-[(R)-4-phosphopantothenoyl]-L-cysteine + H(+) = (R)-4'-phosphopantetheine + CO2. It participates in cofactor biosynthesis; coenzyme A biosynthesis; CoA from (R)-pantothenate: step 3/5. Involved in plant growth and salt and osmotic tolerance. Catalyzes the decarboxylation of 4'-phosphopantothenoylcysteine to 4'-phosphopantetheine, a key step in coenzyme A biosynthesis. The enzyme is also able to decarboxylate pantothenoylcysteine to pantothenoylcysteamine. The chain is Probable phosphopantothenoylcysteine decarboxylase (HAL3B) from Arabidopsis thaliana (Mouse-ear cress).